A 161-amino-acid chain; its full sequence is Allophycocyanin alpha chain (161 aa).

Residue Asn71 is modified to N4-methylasparagine. Residue Cys81 coordinates (2R,3E)-phycocyanobilin.

This sequence belongs to the phycobiliprotein family. In terms of assembly, heterodimer of an alpha and a beta chain. Post-translationally, contains one covalently linked phycocyanobilin chromophore.

The protein resides in the plastid. Its subcellular location is the chloroplast thylakoid membrane. In terms of biological role, light-harvesting photosynthetic bile pigment-protein from the phycobiliprotein complex. Allophycocyanin has a maximum absorption at approximately 650 nanometers. The sequence is that of Allophycocyanin alpha chain (apcA) from Galdieria sulphuraria (Red alga).